The chain runs to 299 residues: Neomycin C epimerase (299 aa).

The region spanning 10–222 is the Radical SAM core domain; it reads PVRQVRAYRN…WNHIFETGRR (213 aa). Cys26, Cys30, Cys33, Cys226, and Cys247 together coordinate [4Fe-4S] cluster. Catalysis depends on Cys249, which acts as the Proton donor. 2 residues coordinate [4Fe-4S] cluster: Cys271 and Cys274.

Belongs to the radical SAM superfamily. It depends on [4Fe-4S] cluster as a cofactor.

It catalyses the reaction neomycin C + AH2 + S-adenosyl-L-methionine = neomycin B + 5'-deoxyadenosine + L-methionine + A + H(+). The protein operates within antibiotic biosynthesis; neomycin biosynthesis. In terms of biological role, catalyzes the last step of neomycin B biosynthesis, i.e. the irreversible epimerization at C-5''' of neomycin C to give neomycin B. To a lesser extent, is also able to convert neomycin Y2 to neomycin Y1. The protein is Neomycin C epimerase of Streptomyces fradiae (Streptomyces roseoflavus).